A 336-amino-acid polypeptide reads, in one-letter code: Dihydroorotate dehydrogenase (quinone) (336 aa).

FMN is bound by residues 62–66 and T86; that span reads AGLDK. K66 lines the substrate pocket. A substrate-binding site is contributed by 111-115; sequence NRMGF. FMN-binding residues include N139 and N172. N172 is a binding site for substrate. Residue S175 is the Nucleophile of the active site. N177 is a binding site for substrate. 2 residues coordinate FMN: K217 and T245. 246 to 247 is a substrate binding site; that stretch reads NT. Residues G268, G297, and 318-319 each bind FMN; that span reads YT.

Belongs to the dihydroorotate dehydrogenase family. Type 2 subfamily. Monomer. The cofactor is FMN.

It is found in the cell membrane. It catalyses the reaction (S)-dihydroorotate + a quinone = orotate + a quinol. It participates in pyrimidine metabolism; UMP biosynthesis via de novo pathway; orotate from (S)-dihydroorotate (quinone route): step 1/1. In terms of biological role, catalyzes the conversion of dihydroorotate to orotate with quinone as electron acceptor. This chain is Dihydroorotate dehydrogenase (quinone), found in Pseudoalteromonas translucida (strain TAC 125).